Here is a 282-residue protein sequence, read N- to C-terminus: MTNFSSSPPIAFGDLQGCHAAYRQLFDTLAPAADTPLWFAGDLVNRGPASLATLREIVALGERAIAVLGNHDLHLLAVAAGIRTLKPGDTIGEILDAPDADDLIEWVRHRPFAHFERGMLMVHAGLLPQWDAALALELADELQRALRAPNWRDTLRSLYGNDPNCWSPDLKHADRLRVAFNAFTRIRFCTPEGAMEFRANGGPAAAPAGYLPWFDAPGRKTADVTVVFGHWAALGLMLRENLVALDSGCVWGNRLSAVRLTDDPAARVVTQVACERCGAADE.

Belongs to the Ap4A hydrolase family.

It catalyses the reaction P(1),P(4)-bis(5'-adenosyl) tetraphosphate + H2O = 2 ADP + 2 H(+). Functionally, hydrolyzes diadenosine 5',5'''-P1,P4-tetraphosphate to yield ADP. The polypeptide is Bis(5'-nucleosyl)-tetraphosphatase, symmetrical (Burkholderia pseudomallei (strain 668)).